Here is a 292-residue protein sequence, read N- to C-terminus: Ribosomal protein L11 methyltransferase (292 aa).

The S-adenosyl-L-methionine site is built by T144, G165, D187, and N229.

The protein belongs to the methyltransferase superfamily. PrmA family.

It localises to the cytoplasm. It catalyses the reaction L-lysyl-[protein] + 3 S-adenosyl-L-methionine = N(6),N(6),N(6)-trimethyl-L-lysyl-[protein] + 3 S-adenosyl-L-homocysteine + 3 H(+). Its function is as follows. Methylates ribosomal protein L11. This Pseudomonas putida (strain W619) protein is Ribosomal protein L11 methyltransferase.